The following is a 206-amino-acid chain: Histidine biosynthesis bifunctional protein HisIE (206 aa).

Residues 1–117 (MGSETTAAGD…SCFPTAPSQF (117 aa)) are phosphoribosyl-AMP cyclohydrolase. Positions 118–206 (LGSLDALIAE…AVALLESRHK (89 aa)) are phosphoribosyl-ATP pyrophosphohydrolase.

In the N-terminal section; belongs to the PRA-CH family. The protein in the C-terminal section; belongs to the PRA-PH family.

The protein resides in the cytoplasm. It carries out the reaction 1-(5-phospho-beta-D-ribosyl)-ATP + H2O = 1-(5-phospho-beta-D-ribosyl)-5'-AMP + diphosphate + H(+). It catalyses the reaction 1-(5-phospho-beta-D-ribosyl)-5'-AMP + H2O = 1-(5-phospho-beta-D-ribosyl)-5-[(5-phospho-beta-D-ribosylamino)methylideneamino]imidazole-4-carboxamide. Its pathway is amino-acid biosynthesis; L-histidine biosynthesis; L-histidine from 5-phospho-alpha-D-ribose 1-diphosphate: step 2/9. The protein operates within amino-acid biosynthesis; L-histidine biosynthesis; L-histidine from 5-phospho-alpha-D-ribose 1-diphosphate: step 3/9. The sequence is that of Histidine biosynthesis bifunctional protein HisIE from Xanthomonas campestris pv. campestris (strain ATCC 33913 / DSM 3586 / NCPPB 528 / LMG 568 / P 25).